The following is a 423-amino-acid chain: Galactosylceramide sulfotransferase (423 aa).

Residues Met1 to Lys14 are Cytoplasmic-facing. A helical; Signal-anchor for type II membrane protein transmembrane segment spans residues Gly15–Pro35. At Pro36–Trp423 the chain is on the lumenal side. 2 N-linked (GlcNAc...) asparagine glycosylation sites follow: Asn66 and Asn312.

The protein belongs to the galactose-3-O-sulfotransferase family. In terms of tissue distribution, expressed in kidney proximal tubule, gastric mucosa and adenocarcinoma. Highly expressed in renal cell carcinoma cell lines.

The protein resides in the golgi apparatus membrane. The enzyme catalyses a beta-D-galactosyl-(1&lt;-&gt;1')-N-acylsphing-4-enine + 3'-phosphoadenylyl sulfate = an N-acyl-1-beta-D-(3-O-sulfo)-galactosyl-sphing-4-enine + adenosine 3',5'-bisphosphate + H(+). It carries out the reaction a 1-O-alkyl-2-acyl-3-O-(beta-D-galactosyl)-sn-glycerol + 3'-phosphoadenylyl sulfate = a 1-O-alkyl-2-acyl-3-(beta-D-3-sulfogalactosyl)-sn-glycerol + adenosine 3',5'-bisphosphate + H(+). It catalyses the reaction a beta-D-Gal-(1&lt;-&gt;1')-ceramide + 3'-phosphoadenylyl sulfate = 1-(3-O-sulfo-beta-D-galactosyl)-ceramide + adenosine 3',5'-bisphosphate + H(+). The catalysed reaction is a 1,2-diacyl-3-O-(beta-D-galactosyl)-sn-glycerol + 3'-phosphoadenylyl sulfate = 1,2-diacyl-3-(3-O-sulfo-beta-D-galactosyl)-sn-glycerol + adenosine 3',5'-bisphosphate + H(+). The enzyme catalyses a beta-D-Gal-(1-&gt;4)-beta-D-Glc-(1&lt;-&gt;1)-Cer(d18:1(4E)) + 3'-phosphoadenylyl sulfate = beta-D-3-sulfogalactosyl-(1-&gt;4)-beta-D-glucosyl-(1&lt;-&gt;1')-N-acylsphing-4-enine + adenosine 3',5'-bisphosphate + H(+). Its pathway is lipid metabolism; sphingolipid metabolism. Its function is as follows. Catalyzes the transfer of a sulfate group to position 3 of non-reducing beta-galactosyl residues in glycerolipids and sphingolipids, therefore participates in the biosynthesis of sulfoglycolipids. Catalyzes the synthesis of galactosylceramide sulfate (sulfatide), a major lipid component of the myelin sheath and of monogalactosylalkylacylglycerol sulfate (seminolipid), present in spermatocytes. Seems to prefer beta-glycosides at the non-reducing termini of sugar chains attached to a lipid moiety. Also acts on lactosylceramide, galactosyl 1-alkyl-2-sn-glycerol and galactosyl diacylglycerol (in vitro). The sequence is that of Galactosylceramide sulfotransferase from Homo sapiens (Human).